The following is a 1291-amino-acid chain: DNA-directed RNA polymerase subunit beta (1291 aa).

The protein belongs to the RNA polymerase beta chain family. As to quaternary structure, the RNAP catalytic core consists of 2 alpha, 1 beta, 1 beta' and 1 omega subunit. When a sigma factor is associated with the core the holoenzyme is formed, which can initiate transcription.

It catalyses the reaction RNA(n) + a ribonucleoside 5'-triphosphate = RNA(n+1) + diphosphate. DNA-dependent RNA polymerase catalyzes the transcription of DNA into RNA using the four ribonucleoside triphosphates as substrates. The chain is DNA-directed RNA polymerase subunit beta from Mycoplasma mycoides subsp. mycoides SC (strain CCUG 32753 / NCTC 10114 / PG1).